Reading from the N-terminus, the 364-residue chain is 3-dehydroquinate synthase (364 aa).

NAD(+) contacts are provided by residues 75-80, 109-113, 133-134, Lys-146, Lys-155, and 173-176; these read DGEQYK, GVIGD, TT, and TLDT. Zn(2+) is bound by residues Glu-188, His-251, and His-268.

The protein belongs to the sugar phosphate cyclases superfamily. Dehydroquinate synthase family. It depends on Co(2+) as a cofactor. Requires Zn(2+) as cofactor. NAD(+) serves as cofactor.

It localises to the cytoplasm. It catalyses the reaction 7-phospho-2-dehydro-3-deoxy-D-arabino-heptonate = 3-dehydroquinate + phosphate. Its pathway is metabolic intermediate biosynthesis; chorismate biosynthesis; chorismate from D-erythrose 4-phosphate and phosphoenolpyruvate: step 2/7. Its function is as follows. Catalyzes the conversion of 3-deoxy-D-arabino-heptulosonate 7-phosphate (DAHP) to dehydroquinate (DHQ). The sequence is that of 3-dehydroquinate synthase from Dechloromonas aromatica (strain RCB).